A 378-amino-acid chain; its full sequence is Chaperone protein DnaJ (378 aa).

Positions 5-70 constitute a J domain; it reads DYYEVLGVAK…QKRAAYDQYG (66 aa). Residues 138–216 form a CR-type zinc finger; it reads GYDTQIRVPS…CHGSGKVKET (79 aa). Residues cysteine 151, cysteine 154, cysteine 168, cysteine 171, cysteine 190, cysteine 193, cysteine 204, and cysteine 207 each contribute to the Zn(2+) site. 4 CXXCXGXG motif repeats span residues 151-158, 168-175, 190-197, and 204-211; these read CEVCHGSG, CPTCHGQG, CPKCHGTG, and CAHCHGSG.

It belongs to the DnaJ family. In terms of assembly, homodimer. The cofactor is Zn(2+).

It is found in the cytoplasm. Its function is as follows. Participates actively in the response to hyperosmotic and heat shock by preventing the aggregation of stress-denatured proteins and by disaggregating proteins, also in an autonomous, DnaK-independent fashion. Unfolded proteins bind initially to DnaJ; upon interaction with the DnaJ-bound protein, DnaK hydrolyzes its bound ATP, resulting in the formation of a stable complex. GrpE releases ADP from DnaK; ATP binding to DnaK triggers the release of the substrate protein, thus completing the reaction cycle. Several rounds of ATP-dependent interactions between DnaJ, DnaK and GrpE are required for fully efficient folding. Also involved, together with DnaK and GrpE, in the DNA replication of plasmids through activation of initiation proteins. This chain is Chaperone protein DnaJ, found in Burkholderia cenocepacia (strain HI2424).